Consider the following 426-residue polypeptide: C2H2 type master regulator of conidiophore development brlA (426 aa).

Disordered stretches follow at residues 25–71 (CPSM…DRGT) and 281–302 (GVRLQRQPSRKMARKQPSKQSL). The span at 30–44 (SSFSPLESPTPTPTS) shows a compositional bias: low complexity. Residues 45–58 (IYSQGSLASPSWPE) show a composition bias toward polar residues. Over residues 288–297 (PSRKMARKQP) the composition is skewed to basic residues. C2H2-type zinc fingers lie at residues 316–340 (FKCKEPGCKGRFKRQEHLKRHMKSH) and 346–371 (HVCWVPGCHRAFSRSDNLNAHYTKTH). Residues 384 to 426 (LDETSPDYNPDYRGPLTADGRPMPGGTLDESMPSREISMEWDE) form a disordered region.

The protein localises to the nucleus. Its function is as follows. BrlA, abaA and wetA are pivotal regulators of conidiophore development and conidium maturation. They act individually and together to regulate their own expression and that of numerous other sporulation-specific genes. Binds promoters of target genes at brlA response elements (BREs) containing the conserved sequence 5'-(C/A)(A/G)AGGG(G/A)-3'. Positively regulates expression of the gliotoxin biosynthetic gene cluster in actively growing vegetative cells, and likely bridges morphological and chemical development during the life-cycle. Regulates (directly or indirectly) the ergot cluster genes. Positively regulates expression of the fumiquinazoline C biosynthetic gene cluster. Positively regulates expression of the melanin biosynthetic gene cluster. Mediates repression of ribosomal protein gene expression in response to nitrogen depletion. In Aspergillus fumigatus (strain ATCC MYA-4609 / CBS 101355 / FGSC A1100 / Af293) (Neosartorya fumigata), this protein is C2H2 type master regulator of conidiophore development brlA.